Consider the following 478-residue polypeptide: Trigger factor (478 aa).

Residues 154–167 (MAKDSRSFEPREEG) are compositionally biased toward basic and acidic residues. 2 disordered regions span residues 154-173 (MAKDSRSFEPREEGAEAQSG) and 444-478 (LFAEDDEADAVTGAAATDEKPSESSNEAAADKAAG). The region spanning 173–258 (GDRVTIDFVG…VKAVAAPGET (86 aa)) is the PPIase FKBP-type domain.

Belongs to the FKBP-type PPIase family. Tig subfamily.

The protein localises to the cytoplasm. It carries out the reaction [protein]-peptidylproline (omega=180) = [protein]-peptidylproline (omega=0). Involved in protein export. Acts as a chaperone by maintaining the newly synthesized protein in an open conformation. Functions as a peptidyl-prolyl cis-trans isomerase. The protein is Trigger factor of Methylorubrum populi (strain ATCC BAA-705 / NCIMB 13946 / BJ001) (Methylobacterium populi).